The primary structure comprises 372 residues: DNA/RNA-binding protein ALBA4 (372 aa).

It belongs to the histone-like Alba family. Identified in a TARE6-associated complex consisting of over 30 proteins and including ALBA1, ALBA2 and ALBA4; the complex binds to the non-coding subtelomeric repeat region TARE6.

Its subcellular location is the nucleus. The protein resides in the chromosome. It is found in the telomere. It localises to the cytoplasm. Its function is as follows. Possesses DNA- and RNA-binding activities. Binds to DNA fragments longer than 14 base pairs with relaxed sequence specificity. Associates with the subtelomeric TARE6 repeats. Regulates the abundance of transcript sub-populations in a stage-specific manner. Regulates activation of male gametocytes. Participates in the coordination of sporozoite development in the oocyst. The sequence is that of DNA/RNA-binding protein ALBA4 from Plasmodium falciparum (isolate 3D7).